The primary structure comprises 162 residues: RNA pyrophosphohydrolase (162 aa).

Residues 7-149 (KYRPCVGIML…KKEVYKTVIE (143 aa)) enclose the Nudix hydrolase domain. The short motif at 40–61 (GGVDDGEELEQAALRELLEEVG) is the Nudix box element.

Belongs to the Nudix hydrolase family. RppH subfamily. Requires a divalent metal cation as cofactor.

Its function is as follows. Accelerates the degradation of transcripts by removing pyrophosphate from the 5'-end of triphosphorylated RNA, leading to a more labile monophosphorylated state that can stimulate subsequent ribonuclease cleavage. The sequence is that of RNA pyrophosphohydrolase from Wolbachia pipientis wMel.